The sequence spans 71 residues: ATP synthase subunit c (71 aa).

2 helical membrane passes run 4 to 24 and 48 to 68; these read AVIGAGIAVLTGLGAGIGIGI and IIGAGLAEATAIYGLIIAFMI.

The protein belongs to the ATPase C chain family. F-type ATPases have 2 components, F(1) - the catalytic core - and F(0) - the membrane proton channel. F(1) has five subunits: alpha(3), beta(3), gamma(1), delta(1), epsilon(1). F(0) has three main subunits: a(1), b(2) and c(10-14). The alpha and beta chains form an alternating ring which encloses part of the gamma chain. F(1) is attached to F(0) by a central stalk formed by the gamma and epsilon chains, while a peripheral stalk is formed by the delta and b chains.

The protein resides in the cell membrane. F(1)F(0) ATP synthase produces ATP from ADP in the presence of a proton or sodium gradient. F-type ATPases consist of two structural domains, F(1) containing the extramembraneous catalytic core and F(0) containing the membrane proton channel, linked together by a central stalk and a peripheral stalk. During catalysis, ATP synthesis in the catalytic domain of F(1) is coupled via a rotary mechanism of the central stalk subunits to proton translocation. Its function is as follows. Key component of the F(0) channel; it plays a direct role in translocation across the membrane. A homomeric c-ring of between 10-14 subunits forms the central stalk rotor element with the F(1) delta and epsilon subunits. In Clostridium botulinum (strain Alaska E43 / Type E3), this protein is ATP synthase subunit c.